The following is a 408-amino-acid chain: Peptidase T (408 aa).

Residues 1–28 (MKNQLIDRLTRYTTIDTQSDPKSTTTPS) form a disordered region. Residues 11–28 (RYTTIDTQSDPKSTTTPS) show a composition bias toward polar residues. Zn(2+) is bound at residue His78. The active site involves Asp80. Asp140 provides a ligand contact to Zn(2+). Glu174 serves as the catalytic Proton acceptor. Zn(2+)-binding residues include Glu175, Asp197, and His379.

It belongs to the peptidase M20B family. Zn(2+) is required as a cofactor.

The protein resides in the cytoplasm. It carries out the reaction Release of the N-terminal residue from a tripeptide.. Its function is as follows. Cleaves the N-terminal amino acid of tripeptides. The polypeptide is Peptidase T (Staphylococcus aureus (strain USA300 / TCH1516)).